The primary structure comprises 159 residues: U1 small nuclear ribonucleoprotein C (159 aa).

A Matrin-type zinc finger spans residues phenylalanine 4–aspartate 36. 2 disordered regions span residues proline 63–proline 95 and methionine 139–arginine 159. Pro residues predominate over residues isoleucine 77 to proline 95.

Belongs to the U1 small nuclear ribonucleoprotein C family. As to quaternary structure, component of the U1 snRNP. The U1 snRNP is composed of the U1 snRNA and the 7 core Sm proteins snrpb, snrpd1, snrpd2, snrpd3, snrpe, snrpf and snrpg that assemble in a heptameric protein ring on the Sm site of the small nuclear RNA to form the core snRNP, and at least 3 U1 snRNP-specific proteins snrnp70/U1-70K, snrpa/U1-A and snrpc/U1-C. snrpc/U1-C interacts with U1 snRNA and the 5' splice-site region of the pre-mRNA.

The protein resides in the nucleus. Component of the spliceosomal U1 snRNP, which is essential for recognition of the pre-mRNA 5' splice-site and the subsequent assembly of the spliceosome. SNRPC/U1-C is directly involved in initial 5' splice-site recognition for both constitutive and regulated alternative splicing. The interaction with the 5' splice-site seems to precede base-pairing between the pre-mRNA and the U1 snRNA. Stimulates commitment or early (E) complex formation by stabilizing the base pairing of the 5' end of the U1 snRNA and the 5' splice-site region. The polypeptide is U1 small nuclear ribonucleoprotein C (Xenopus laevis (African clawed frog)).